We begin with the raw amino-acid sequence, 433 residues long: MTDFFKDIPAIRYEGPDTENEFAFRHYNPDEVVMGKTLKDHLRFACAYWHSFAWPGGDPFGGQTFERPWFGDTMELAKLKADVAFDMFERLGVPYFCFHDADVRPEGDTFAESTKNLEEITDYFAEKMDATGVKLLWGTANLFSHRRFMAGAATNPDPEVFAYSAATIKSCMDATRKLGGENYVLWGGREGYETLLNTDMARERAQAGRMLQMVVDYKHKTGFAGTILIEPKPQEPTKHQYDYDVATVYGFLKDFGLEGEVKVNIEQGHAILAGHSFEHELALARALGIFGSIDMNRNDYQSGWDTDQFPNNVPEMALAYYEVLRAGGFDTGGTNFDAKLRRQSLDPADLILAHVGGMDACAAGLKAAAAMLEDGKLEAAREARYAGWSEGLGQKLLTSDLAEISDLVIAKGINPQPRSGRQERLENLVNKYL.

Catalysis depends on residues His-99 and Asp-102. Mg(2+) is bound by residues Glu-230, Glu-266, His-269, Asp-294, Asp-305, Asp-307, and Asp-337.

Belongs to the xylose isomerase family. As to quaternary structure, homotetramer. It depends on Mg(2+) as a cofactor.

The protein resides in the cytoplasm. It catalyses the reaction alpha-D-xylose = alpha-D-xylulofuranose. In Roseobacter denitrificans (strain ATCC 33942 / OCh 114) (Erythrobacter sp. (strain OCh 114)), this protein is Xylose isomerase.